We begin with the raw amino-acid sequence, 571 residues long: MALDVLGRLGFFNCGSGSVVTPCSASARLSSELEPSKQRNRSWFRSPGSGGSTWAVANILCFDKDTIPESFRNGRLRSRARQKTLLEGASRSSLSSAARLWISKTAGIPSSRTGCRGSVLNGGWSGGEVAGEGRKSLLPIKRHSSCSSQSLPQQQRRTKDAGRVVCYSHRKRNLGSLLGSRVVEEPWSWILEGYVLKGLTGRRNDGPSELELGRGSYRGGPVHGANHIRPLQRPDSVHPQPLTSARPRRGTEHDELPLRRTLRNCIPHSRDTPPKRDTGIASEKDWGINLKNEKTSESGVNEDGSTWYRESGEDLGDNGYRCRWTVMGGKNADGTSEWKEAWWEKSDWTGYKELGAEKSGKNAQGDTWWETWQEILRQDDWSNLARIEKSAQKQAKSGSGTAGWYEKWWEKYNAKGWSEKGAHKYGRLNDQGWWEKWGEQYDGRGAVLKWTDKWAETDMGTKWGDKWEERFNVGIGTRQGETWHYSATGERWSRTWGEEHFGNGKVHKYGKSTSGESWDSVVEEGTFYQAEPHYGWADAVGNSGQLLSIVALERPPGIYPDLDLGMNKEQQ.

Disordered stretches follow at residues 142-162 (RHSS…KDAG) and 215-254 (GSYR…TEHD). Positions 145–155 (SCSSQSLPQQQ) are enriched in low complexity.

This sequence belongs to the ESV1 family.

Its subcellular location is the plastid. The protein localises to the chloroplast stroma. Binds preferentially to highly ordered alpha-glucans, such as starch and crystalline maltodextrins. Involved in the organization of the starch granule matrix, thus influencing starch turnover by modulating the accessibility of starch polymers to modifying and degrading enzymes. Required for the control of starch degradation in leaves and starch distribution in nonphotosynthetic parts. Promotes gravitropic responses, negative in shoots but positive in roots, by facilitating starch granules (statoliths) formation in hypocotyls and roots columella. This Marchantia polymorpha (Common liverwort) protein is Protein EARLY STARVATION 1, chloroplastic.